Consider the following 148-residue polypeptide: Large ribosomal subunit protein bL9 (148 aa).

The protein belongs to the bacterial ribosomal protein bL9 family.

Binds to the 23S rRNA. In Aliarcobacter butzleri (strain RM4018) (Arcobacter butzleri), this protein is Large ribosomal subunit protein bL9.